A 200-amino-acid polypeptide reads, in one-letter code: dITP/XTP pyrophosphatase (200 aa).

8–13 serves as a coordination point for substrate; it reads TGNQGK. Asp-69 (proton acceptor) is an active-site residue. Asp-69 lines the Mg(2+) pocket. Substrate contacts are provided by residues Ser-70, 154 to 157, Lys-177, and 182 to 183; these read FGYD and HR.

Belongs to the HAM1 NTPase family. Homodimer. Mg(2+) is required as a cofactor.

It catalyses the reaction XTP + H2O = XMP + diphosphate + H(+). The enzyme catalyses dITP + H2O = dIMP + diphosphate + H(+). The catalysed reaction is ITP + H2O = IMP + diphosphate + H(+). Functionally, pyrophosphatase that catalyzes the hydrolysis of nucleoside triphosphates to their monophosphate derivatives, with a high preference for the non-canonical purine nucleotides XTP (xanthosine triphosphate), dITP (deoxyinosine triphosphate) and ITP. Seems to function as a house-cleaning enzyme that removes non-canonical purine nucleotides from the nucleotide pool, thus preventing their incorporation into DNA/RNA and avoiding chromosomal lesions. The protein is dITP/XTP pyrophosphatase of Vibrio cholerae serotype O1 (strain ATCC 39315 / El Tor Inaba N16961).